We begin with the raw amino-acid sequence, 399 residues long: Acetate kinase (399 aa).

Residue N10 participates in Mg(2+) binding. ATP is bound at residue K17. R91 provides a ligand contact to substrate. D148 functions as the Proton donor/acceptor in the catalytic mechanism. ATP contacts are provided by residues 208–212, 283–285, and 331–335; these read HLGNG, DCR, and GIGEN. E385 contributes to the Mg(2+) binding site.

Belongs to the acetokinase family. In terms of assembly, homodimer. Mg(2+) serves as cofactor. It depends on Mn(2+) as a cofactor.

It localises to the cytoplasm. The enzyme catalyses acetate + ATP = acetyl phosphate + ADP. The protein operates within metabolic intermediate biosynthesis; acetyl-CoA biosynthesis; acetyl-CoA from acetate: step 1/2. Catalyzes the formation of acetyl phosphate from acetate and ATP. Can also catalyze the reverse reaction. This is Acetate kinase from Shewanella sp. (strain MR-4).